The primary structure comprises 93 residues: Alpha-defensin 10 (93 aa).

Positions 1 to 19 (MKTLVLLSALVLLAFQVQA) are cleaved as a signal peptide. Residues 20-58 (DPIQNTDEETKTEEQPGEDDQAVSVSFGDPEGSSLQEES) constitute a propeptide that is removed on maturation. The segment at 22–56 (IQNTDEETKTEEQPGEDDQAVSVSFGDPEGSSLQE) is disordered. 3 disulfides stabilise this stretch: C64–C92, C66–C81, and C71–C91.

Belongs to the alpha-defensin family. Paneth cells of the small bowel.

The protein localises to the secreted. Functionally, probably contributes to the antimicrobial barrier function of the small bowel mucosa. This chain is Alpha-defensin 10 (Defa10), found in Mus musculus (Mouse).